Consider the following 273-residue polypeptide: Peptide deformylase 1B, chloroplastic/mitochondrial (273 aa).

The N-terminal 56 residues, Met1 to Arg56, are a transit peptide targeting the chloroplast and mitochondrion. Fe cation-binding residues include Cys171 and His213. Glu214 is an active-site residue. Residue His217 participates in Fe cation binding. The segment covering Tyr246–Arg261 has biased composition (basic and acidic residues). The interval Tyr246–Arg273 is disordered. The segment covering Gln262–Arg273 has biased composition (basic residues).

This sequence belongs to the polypeptide deformylase family. In terms of assembly, homodimer. The cofactor is Fe(2+). Expressed in leaves and flowers.

It localises to the plastid. It is found in the chloroplast stroma. The protein resides in the mitochondrion. It catalyses the reaction N-terminal N-formyl-L-methionyl-[peptide] + H2O = N-terminal L-methionyl-[peptide] + formate. Inhibited by actinonin. Functionally, removes the formyl group from the N-terminal Met of newly synthesized proteins. Has a preferred substrate specificity towards the photosystem II (PS II) D1 polypeptide. The protein is Peptide deformylase 1B, chloroplastic/mitochondrial (PDF1B) of Arabidopsis thaliana (Mouse-ear cress).